Here is a 160-residue protein sequence, read N- to C-terminus: Lipoprotein signal peptidase (160 aa).

3 consecutive transmembrane segments (helical) span residues 6–26 (VWSS…IKYL), 58–78 (LAWL…AFVL), and 95–115 (FALV…HGYV). Catalysis depends on residues Asp-117 and Asp-135. The helical transmembrane segment at 127–147 (SFAVFNLADAFITIGAGLIIL) threads the bilayer.

It belongs to the peptidase A8 family.

The protein localises to the cell inner membrane. It catalyses the reaction Release of signal peptides from bacterial membrane prolipoproteins. Hydrolyzes -Xaa-Yaa-Zaa-|-(S,diacylglyceryl)Cys-, in which Xaa is hydrophobic (preferably Leu), and Yaa (Ala or Ser) and Zaa (Gly or Ala) have small, neutral side chains.. Its pathway is protein modification; lipoprotein biosynthesis (signal peptide cleavage). This protein specifically catalyzes the removal of signal peptides from prolipoproteins. The chain is Lipoprotein signal peptidase from Brucella abortus (strain S19).